A 219-amino-acid polypeptide reads, in one-letter code: Putative NAD(P)H nitroreductase SSP0379 (219 aa).

It belongs to the nitroreductase family. It depends on FMN as a cofactor.

This chain is Putative NAD(P)H nitroreductase SSP0379, found in Staphylococcus saprophyticus subsp. saprophyticus (strain ATCC 15305 / DSM 20229 / NCIMB 8711 / NCTC 7292 / S-41).